The primary structure comprises 181 residues: Adenylate kinase (181 aa).

10-15 (GAGKGT) is an ATP binding site. Residues 30 to 59 (STGDLFRANISQQTPLGREAQKYMDAGDLV) are NMP. Residues threonine 31, arginine 36, 57 to 59 (DLV), 85 to 88 (GYPR), and glutamine 92 each bind AMP. The segment at 126–132 (ARGRNDD) is LID. An ATP-binding site is contributed by arginine 127. 2 residues coordinate AMP: arginine 129 and arginine 140. An ATP-binding site is contributed by glycine 166.

It belongs to the adenylate kinase family. Monomer.

It localises to the cytoplasm. The enzyme catalyses AMP + ATP = 2 ADP. It functions in the pathway purine metabolism; AMP biosynthesis via salvage pathway; AMP from ADP: step 1/1. Catalyzes the reversible transfer of the terminal phosphate group between ATP and AMP. Plays an important role in cellular energy homeostasis and in adenine nucleotide metabolism. This chain is Adenylate kinase, found in Nocardia farcinica (strain IFM 10152).